The following is a 1462-amino-acid chain: Protein peg1 (1462 aa).

Disordered stretches follow at residues 528 to 563 (SFSK…SRER) and 573 to 592 (FHST…SIAI). Low complexity-rich tracts occupy residues 538–552 (SSNS…RLGL) and 574–589 (HSTS…HSPS). Position 599 is a phosphoserine (S599). The interval 838–928 (SSTHQEHLSK…NCSEESLDDH (91 aa)) is disordered. Residues 847-866 (KNLPTLNTSSSSNSSQTDLL) show a composition bias toward low complexity. Over residues 870–896 (GKGETKETEMQSPIESKEGLLSKDTHI) the composition is skewed to basic and acidic residues. S1221 bears the Phosphoserine mark. Residues 1342-1367 (TLIAEIADLQGLYEFTQQRLQSLNTE) are a coiled coil.

This sequence belongs to the CLASP family. Interacts with microtubules. Interacts with dhc1, mal3 and tea1.

It localises to the cytoplasm. The protein localises to the cytoskeleton. The protein resides in the spindle. Its subcellular location is the microtubule organizing center. It is found in the spindle pole body. Functionally, microtubule binding protein that regulates the stability of dynamic microtubules. Required for mitotic spindle formation. The chain is Protein peg1 (peg1) from Schizosaccharomyces pombe (strain 972 / ATCC 24843) (Fission yeast).